The following is a 98-amino-acid chain: uncharacterized protein (98 aa).

This sequence belongs to the HesB/IscA family.

This is an uncharacterized protein from Staphylococcus aureus (strain MRSA252).